We begin with the raw amino-acid sequence, 243 residues long: Ribosomal RNA small subunit methyltransferase G (243 aa).

S-adenosyl-L-methionine contacts are provided by residues glycine 79, phenylalanine 84, 130 to 131 (AE), and arginine 150. Residues 222–243 (KPTPNKYPRKPGIPNKQPLGGA) form a disordered region.

Belongs to the methyltransferase superfamily. RNA methyltransferase RsmG family.

The protein localises to the cytoplasm. In terms of biological role, specifically methylates the N7 position of a guanine in 16S rRNA. The protein is Ribosomal RNA small subunit methyltransferase G of Lacticaseibacillus paracasei (strain ATCC 334 / BCRC 17002 / CCUG 31169 / CIP 107868 / KCTC 3260 / NRRL B-441) (Lactobacillus paracasei).